The primary structure comprises 718 residues: Manganese-exporting P-type ATPase (718 aa).

An HMA domain is found at 11-78 (GRMRVKVDWV…AIKGAAHVAA (68 aa)). 6 helical membrane passes run 87–105 (HSAE…GGVA), 128–146 (TVAT…RGAL), 154–168 (AGTD…VASL), 177–191 (LTVL…YLQD), 327–351 (VGEN…LITG), and 357–375 (MTML…TPTA). The 4-aspartylphosphate intermediate role is filled by D408. Residues D408, T410, and D610 each contribute to the Mg(2+) site. Helical transmembrane passes span 661 to 680 (AVDV…AAGL) and 690 to 709 (PVLA…ANSS).

It belongs to the cation transport ATPase (P-type) (TC 3.A.3) family. Type IB subfamily.

Its subcellular location is the cell membrane. The enzyme catalyses Mn(2+)(in) + ATP + H2O = Mn(2+)(out) + ADP + phosphate + H(+). Functionally, high affinity, slow turnover Mn(2+) transporting ATPase. The polypeptide is Manganese-exporting P-type ATPase (ctpC) (Mycobacterium bovis (strain ATCC BAA-935 / AF2122/97)).